The sequence spans 782 residues: HHIP-like protein 1 (782 aa).

The signal sequence occupies residues 1-19 (MARARAGALLALWVLGAAA). 4 cysteine pairs are disulfide-bonded: cysteine 181-cysteine 521, cysteine 185-cysteine 528, cysteine 399-cysteine 417, and cysteine 484-cysteine 584. Residue asparagine 234 is glycosylated (N-linked (GlcNAc...) asparagine). The interval 604-666 (EKFIPKTRST…RRGRLNSASR (63 aa)) is disordered. Residues 610 to 623 (TRSTPRPTARAPTR) are compositionally biased toward low complexity. Positions 632–642 (AAPPAPTPRPA) are enriched in pro residues. An SRCR domain is found at 673–776 (VRLVRPAGLS…HDEDAGVVCS (104 aa)). Intrachain disulfides connect cysteine 700–cysteine 765, cysteine 713–cysteine 775, and cysteine 745–cysteine 755.

It belongs to the HHIP family.

Its subcellular location is the secreted. The protein is HHIP-like protein 1 (HHIPL1) of Homo sapiens (Human).